The following is a 234-amino-acid chain: Ubiquinone biosynthesis O-methyltransferase (234 aa).

S-adenosyl-L-methionine-binding residues include R39, G59, D80, and M124.

It belongs to the methyltransferase superfamily. UbiG/COQ3 family.

The enzyme catalyses a 3-demethylubiquinol + S-adenosyl-L-methionine = a ubiquinol + S-adenosyl-L-homocysteine + H(+). It catalyses the reaction a 3-(all-trans-polyprenyl)benzene-1,2-diol + S-adenosyl-L-methionine = a 2-methoxy-6-(all-trans-polyprenyl)phenol + S-adenosyl-L-homocysteine + H(+). It participates in cofactor biosynthesis; ubiquinone biosynthesis. Its function is as follows. O-methyltransferase that catalyzes the 2 O-methylation steps in the ubiquinone biosynthetic pathway. The polypeptide is Ubiquinone biosynthesis O-methyltransferase (Aliivibrio fischeri (strain ATCC 700601 / ES114) (Vibrio fischeri)).